Consider the following 373-residue polypeptide: Asporin (373 aa).

The first 15 residues, 1-15 (MKEYVMLLLLAVCSA), serve as a signal peptide directing secretion. Positions 16 to 32 (KPFFSPSHTALKNMMLK) are excised as a propeptide. Ser48 carries O-linked (GalNAc...) serine glycosylation. The 37-residue stretch at 59–95 (FFPFDLFPTCPFGCQCYSRVVHCSDLGLTSVPNNIPF) folds into the LRRNT domain. Intrachain disulfides connect Cys68–Cys74 and Cys72–Cys81. LRR repeat units follow at residues 96-117 (DTRM…DFKG), 120-141 (SLYA…TFLT), 144-166 (KLRR…PKSL), 167-186 (AELR…TFKG), 189-212 (ALHV…AFEG), 235-255 (TLLE…EDLK), 259-280 (ELQR…TFAN), 283-305 (RVRE…QELK), 306-327 (YLQI…DFCP), 328-349 (TVPK…PMKY), and 350-373 (WEIQ…NVGK). The interaction with TGFB1 stretch occupies residues 159 to 205 (PLNLPKSLAELRIHDNKVKKIQKDTFKGMNALHVLEMSANPLENNGI). The N-linked (GlcNAc...) asparagine glycan is linked to Asn275. A disulfide bond links Cys326 and Cys359.

Belongs to the small leucine-rich proteoglycan (SLRP) family. SLRP class I subfamily. Interacts with type I collagen. DCN can inhibit collagen binding. Interacts with TGFB1, TGFB2 and TGFB3. DCN, BGN, and FMOD inhibit binding to TGFB1. Interacts with BMP2. Interacts in vitro with type II collagen. Higher expression in heart, also detected in kidney, stomach, testes, and skin but only weakly in lung, skeletal muscle, small intestine, and thymus. Expressed specifically and predominantly in the periodontal ligament (PDL). During tooth development, strong expression is seen in the dental follicle, which is the progenitor tissue that forms cementum, alveolar bone, and the PDL. Expressed in the perichondria of the maxilla, mandible, vertebrae, and long bones. Predominantly expressed in the perichondrium/periosteum of long bones (at protein level).

The protein resides in the secreted. The protein localises to the extracellular space. It is found in the extracellular matrix. Binds calcium and plays a role in osteoblast-driven collagen biomineralization activity. Critical regulator of TGF-beta in articular cartilage and plays an essential role in cartilage homeostasis and osteoarthritis (OA) pathogenesis. Negatively regulates chondrogenesis in the articular cartilage by blocking the TGF-beta/receptor interaction on the cell surface and inhibiting the canonical TGF-beta/Smad signal. Negatively regulates periodontal ligament (PDL) differentiation and mineralization to ensure that the PDL is not ossified and to maintain homeostasis of the tooth-supporting system. Inhibits BMP2-induced cytodifferentiation of PDL cells by preventing its binding to BMPR1B/BMP type-1B receptor, resulting in inhibition of BMP-dependent activation of SMAD proteins. Inhibits the interaction between TGFB1 and TGF-beta receptor type II in the presence of heparin/heparan sulfate in vitro. The protein is Asporin (Aspn) of Mus musculus (Mouse).